We begin with the raw amino-acid sequence, 258 residues long: Ribosomal RNA large subunit methyltransferase E (258 aa).

S-adenosyl-L-methionine-binding residues include G58, W60, D78, D96, and D120. K160 (proton acceptor) is an active-site residue.

This sequence belongs to the class I-like SAM-binding methyltransferase superfamily. RNA methyltransferase RlmE family.

It localises to the cytoplasm. The catalysed reaction is uridine(2552) in 23S rRNA + S-adenosyl-L-methionine = 2'-O-methyluridine(2552) in 23S rRNA + S-adenosyl-L-homocysteine + H(+). Its function is as follows. Specifically methylates the uridine in position 2552 of 23S rRNA at the 2'-O position of the ribose in the fully assembled 50S ribosomal subunit. The chain is Ribosomal RNA large subunit methyltransferase E from Methanococcus maripaludis (strain C5 / ATCC BAA-1333).